The chain runs to 675 residues: Vitamin K-dependent protein S (675 aa).

An N-terminal signal peptide occupies residues 1 to 24; that stretch reads MRVLSVRFRVLLACLALVLPNSET. The propeptide occupies 25 to 41; that stretch reads NFLSKERASQVLVRKRR. Residues 42-87 form the Gla domain; the sequence is ANTLLEETKKGNLERECIEELCNKEEAREVFENNPETDYFYPKYLG. E47, E48, E55, E57, E60, E61, E66, E67, E70, E73, and E77 each carry 4-carboxyglutamate. C58 and C63 are disulfide-bonded. A thrombin-sensitive region spans residues 88 to 116; the sequence is CLGAFRVGAFSAARQSANAYPDLRSCVNA. Residues 117 to 155 enclose the EGF-like 1 domain; that stretch reads IPDQCDPMPCNEDGYLSCKDGQGAFTCICKPGWQGDKCQ. Cystine bridges form between C121–C134, C126–C143, C145–C154, C161–C175, C171–C184, C186–C199, C205–C217, C212–C226, C228–C241, C247–C256, C252–C265, C267–C282, and C449–C475. D136 carries the post-translational modification (3R)-3-hydroxyaspartate. The 44-residue stretch at 157–200 folds into the EGF-like 2; calcium-binding domain; that stretch reads DINECKDPSNINGGCSQTCDNTPGSYHCSCKIGFAMLTNKKDCK. The region spanning 201–242 is the EGF-like 3; calcium-binding domain; it reads DVDECSLKPSVCGTAVCKNIPGDFECECPNGYRYDPSSKSCK. The 41-residue stretch at 243–283 folds into the EGF-like 4; calcium-binding domain; it reads DVDECSENTCAQLCVNYPGGYSCYCDGKKGFKLAQDQRSCE. 2 consecutive Laminin G-like domains span residues 299–475 and 484–665; these read LLYL…NKHC and YYPG…AHSC. Residues N499 and N509 are each glycosylated (N-linked (GlcNAc...) asparagine).

The iron and 2-oxoglutarate dependent 3-hydroxylation of aspartate and asparagine is (R) stereospecific within EGF domains. In terms of tissue distribution, plasma.

The protein resides in the secreted. Its function is as follows. Anticoagulant plasma protein; it is a cofactor to activated protein C in the degradation of coagulation factors Va and VIIIa. It helps to prevent coagulation and stimulating fibrinolysis. This Rattus norvegicus (Rat) protein is Vitamin K-dependent protein S (Pros1).